We begin with the raw amino-acid sequence, 162 residues long: UPF0303 protein RL3365 (162 aa).

Belongs to the UPF0303 family.

The polypeptide is UPF0303 protein RL3365 (Rhizobium johnstonii (strain DSM 114642 / LMG 32736 / 3841) (Rhizobium leguminosarum bv. viciae)).